A 213-amino-acid chain; its full sequence is N-(5'-phosphoribosyl)anthranilate isomerase (213 aa).

This sequence belongs to the TrpF family.

It catalyses the reaction N-(5-phospho-beta-D-ribosyl)anthranilate = 1-(2-carboxyphenylamino)-1-deoxy-D-ribulose 5-phosphate. It functions in the pathway amino-acid biosynthesis; L-tryptophan biosynthesis; L-tryptophan from chorismate: step 3/5. The chain is N-(5'-phosphoribosyl)anthranilate isomerase from Rhodopseudomonas palustris (strain TIE-1).